The primary structure comprises 410 residues: Segmentation protein fushi tarazu (410 aa).

3 disordered regions span residues 71–93 (TQTV…KAED), 138–157 (PAVS…QEYV), and 175–221 (SPQS…SAVS). The span at 76–85 (PVQPTTPPPK) shows a compositional bias: pro residues. The span at 190–199 (TPPPTTPTSL) shows a compositional bias: pro residues. Residues 254-313 (SKRTRQTYTRYQTLELEKEFHFNRYITRRRRIDIANALSLSERQIKIWFQNRRMKSKKDR) constitute a DNA-binding region (homeobox).

It belongs to the Antp homeobox family. Phosphorylated at as many as 16 sites. As to expression, expressed early in development in a striped pattern at the blastoderm stage. Later expressed in a specific subset of neuronal precursor cells, neurons and glia in the developing CNS. Between 5 and 6 hours of development, found in the midline precursor-2 cells in a segmentally repeating pattern. Expression in many other neuronal precursors follows and reaches a second peak of abundance at 9 hours of development. Expressed in the hindgut between 11-15 hours of development.

Its subcellular location is the nucleus. Functionally, may play a role in determining neuronal identity, may be directly involved in specifying identity of individual neurons. Required during embryogenesis for the process of body segmentation. Homeotic protein, required in alternating segment primordia, it specifies the correct number of segments. This Drosophila melanogaster (Fruit fly) protein is Segmentation protein fushi tarazu (ftz).